We begin with the raw amino-acid sequence, 225 residues long: Histone H1.11L (225 aa).

Low complexity-rich tracts occupy residues 1–23 (MSETAPAPAAEAAPAAAPAPAKA) and 31–43 (AAGGAKARKPAGP). Disordered stretches follow at residues 1-46 (MSET…PSVT) and 94-225 (SKGT…AKKK). Residue serine 2 is modified to N-acetylserine. Residues 41–114 (AGPSVTELIT…GASGSFRLSK (74 aa)) form the H15 domain. Composition is skewed to basic residues over residues 123–138 (APKKKASAAKPKKPAA), 146–163 (KKPKKAVAVKKSPKKAKK), 171–189 (KSAKSPKKVTKAVKPKKAV), and 198–225 (KAVKPKAAKPKAAKPKAAKAKKAAAKKK).

This sequence belongs to the histone H1/H5 family.

It localises to the nucleus. Its subcellular location is the chromosome. Its function is as follows. Histones H1 are necessary for the condensation of nucleosome chains into higher-order structures. The chain is Histone H1.11L from Gallus gallus (Chicken).